Consider the following 963-residue polypeptide: MSTTSLQPFAPSFSPFPSTQSLGMAPSQTIGLDTLAEGSQYSLEQLQLSREAGNDAATATSSTSLRSSSFSKSTDQSVSNPSGNHHSNNGPPSDFKSSQRDPLAEARSAIRKNSTSAPVRRRISRACDQCNQLRTKCDGQHPCAHCIEFGLTCEYARERKKRGKASKKDLAAAAAAAAAAGSTSSSTANDGGPMLTKGHSPSDGRSSHEINGRYDPAFDAARTLTNSAQSQLQSHADVPGMVGMQNSQQPHSQPPLGAALDALHLNHFSALNESNRPQMSVPDLRTLQMLHPSGTNPRSPSAVLPSQGLNSYNETAYSLMNPQESNPASMNHFRLGSSAENQPPSFLGLSPPAQSPGWLPLPSPSPANFPSFSMNPYPSTLRYPVLQPVLPHIASIIPQSLACDLLDVYFTSFSPSHLSPLSPYVVAYIFRKQSFLHPTKPRVCSPGLLASMLWVAAQTSDAAFLTSPPSARGRVCQKLLELTIGLLRPLIHGPAPGETSPNYAANMVINGVALGGFGVSMDQLGAQSTATGAVDDVATYVHLATVVSASEYKAASIRWWTAAWSLARELKLGRELPPNTNTARQDGDRDADSDVDMSKRNLPSLVTSVGHGSGTPLNVTEEEREERRRLWWLLYATDRHLALCYNQPLRLLDKECEGLLQPMNDDLWQAGDFGAVGYRQVGPPIECSGHSMFGYFLPLMTILGGIVDLQQAKEHPRFGIAFRNSSEWEHQVLELTRQLETYGQSLKEFESRYTSSLALGAADNETIVDGGHLDHVSPSGRSSSTVGSRINESIVHTKMVVAYGTHIMHVLHILLAGKWDPINLLEDQDLWISSESFITAMGHAVGAADAAADILEYDPDLSFMPFFFGIYLLQGSFLLLLAADKLQGDASPSVVRACETIVRAHEACVVTLNTEYQTFRKVMRSALAQVRGRMPEDFGEQQQRRREVLALYRWTGDGSGLAL.

Disordered regions lie at residues 1–30 (MSTT…SQTI) and 46–121 (LQLS…PVRR). Low complexity predominate over residues 8–18 (PFAPSFSPFPS). Residues 19 to 30 (TQSLGMAPSQTI) show a composition bias toward polar residues. Residues 56–93 (AATATSSTSLRSSSFSKSTDQSVSNPSGNHHSNNGPPS) are compositionally biased toward low complexity. A DNA-binding region (zn(2)-C6 fungal-type) is located at residues 127–153 (CDQCNQLRTKCDGQHPCAHCIEFGLTC). Residues 178 to 188 (AAAGSTSSSTA) are compositionally biased toward low complexity. Disordered stretches follow at residues 178–213 (AAAG…INGR), 322–349 (PQES…FLGL), and 576–597 (LPPN…DVDM). The span at 200–212 (SPSDGRSSHEING) shows a compositional bias: basic and acidic residues. Positions 585 to 597 (QDGDRDADSDVDM) are enriched in basic and acidic residues.

The protein belongs to the xlnR/xlr1 family.

It is found in the nucleus. Transcriptional activator of the xylanolytic system. Involved in the regulation of extracellular cellulolytic and xylanolytic genes and in the regulation of the intracellular activities of D-xylose catabolic genes in the pentose catabolic pathway (PCP) in response to the presence of D-xylose. This is Xylanolytic transcriptional activator xlnR (xlnR) from Aspergillus terreus (strain NIH 2624 / FGSC A1156).